A 188-amino-acid polypeptide reads, in one-letter code: Peptide deformylase (188 aa).

2 residues coordinate Fe cation: Cys-94 and His-136. Residue Glu-137 is part of the active site. His-140 contacts Fe cation.

It belongs to the polypeptide deformylase family. The cofactor is Fe(2+).

The enzyme catalyses N-terminal N-formyl-L-methionyl-[peptide] + H2O = N-terminal L-methionyl-[peptide] + formate. In terms of biological role, removes the formyl group from the N-terminal Met of newly synthesized proteins. Requires at least a dipeptide for an efficient rate of reaction. N-terminal L-methionine is a prerequisite for activity but the enzyme has broad specificity at other positions. This chain is Peptide deformylase, found in Chlorobium phaeobacteroides (strain DSM 266 / SMG 266 / 2430).